We begin with the raw amino-acid sequence, 294 residues long: 2,2',3-trihydroxybiphenyl dioxygenase (294 aa).

VOC domains are found at residues 7–120 (GYLI…LYVE) and 144–264 (GLGH…LGFG). The Fe cation site is built by His-147, His-209, and Glu-260.

Belongs to the extradiol ring-cleavage dioxygenase family. As to quaternary structure, monomer. Fe(2+) is required as a cofactor.

The protein operates within xenobiotic degradation; dibenzo-p-dioxin degradation; 2-hydroxymuconate and catechol from dibenzo-p-dioxin: step 2/3. Its pathway is xenobiotic degradation; dibenzofuran degradation; 2-hydroxy-2,4-pentadienoate and salicylate from dibenzofuran: step 2/3. Its function is as follows. Responsible for meta-cleavage of the first aromatic ring of 2,2',3-trihydroxybiphenyl and 2,3-dihydroxybiphenyl. 2,2',3-trihydroxydiphenyl ether, catechol, 3-methylcatechol, and 4-methylcatechol are oxidized less efficiently and 3,4-dihydroxybiphenyl is oxidized considerably less efficiently. This Sphingomonas paucimobilis (Pseudomonas paucimobilis) protein is 2,2',3-trihydroxybiphenyl dioxygenase (dbfB).